We begin with the raw amino-acid sequence, 188 residues long: Myc target protein 1 (188 aa).

A helical membrane pass occupies residues 24–44; it reads FTVSVAIGLAIGGFLWALFVF. Residues 47–65 carry the Bipartite nuclear localization signal motif; it reads RRRRASAPISQWSPTRRPR. Phosphoserine occurs at positions 87, 90, 93, and 101.

The protein belongs to the MYCT1 family. As to expression, highly expressed in lung, heart, and skeletal muscle. Expressed in brain, eye, liver, kidney, smooth muscle, pancreas, thyroid, thymus, submaxillary gland, spleen, testis, ovary, prostate, epididymis, and uterus. Deregulated expression promotes apoptosis in response to growth factor deprivation. Overexpression in synergy with CCNB1 may promote genomic instability.

The protein localises to the nucleus membrane. In terms of biological role, may regulate certain MYC target genes, MYC seems to be a direct upstream transcriptional activator. Does not seem to significantly affect growth cell capacity. Overexpression seems to mediate many of the known phenotypic features associated with MYC, including promotion of apoptosis, alteration of morphology, enhancement of anchorage-independent growth, tumorigenic conversion, promotion of genomic instability and inhibition of hematopoietic differentiation. The chain is Myc target protein 1 (Myct1) from Mus musculus (Mouse).